Here is an 83-residue protein sequence, read N- to C-terminus: High-potential iron-sulfur protein (83 aa).

[4Fe-4S] cluster-binding residues include Cys43, Cys46, Cys61, and Cys75.

Belongs to the high-potential iron-sulfur protein (HiPIP) family. As to quaternary structure, homodimer.

The protein resides in the periplasm. In terms of biological role, specific class of high-redox-potential 4Fe-4S ferredoxins. Functions in anaerobic electron transport in most purple and in some other photosynthetic bacteria and in at least one genus (Paracoccus) of halophilic, denitrifying bacteria. The protein is High-potential iron-sulfur protein of Thiocystis violacea.